The following is a 485-amino-acid chain: Glutamyl-tRNA(Gln) amidotransferase subunit A (485 aa).

Catalysis depends on charge relay system residues Lys78 and Ser153. Ser177 functions as the Acyl-ester intermediate in the catalytic mechanism.

The protein belongs to the amidase family. GatA subfamily. Heterotrimer of A, B and C subunits.

It carries out the reaction L-glutamyl-tRNA(Gln) + L-glutamine + ATP + H2O = L-glutaminyl-tRNA(Gln) + L-glutamate + ADP + phosphate + H(+). Its function is as follows. Allows the formation of correctly charged Gln-tRNA(Gln) through the transamidation of misacylated Glu-tRNA(Gln) in organisms which lack glutaminyl-tRNA synthetase. The reaction takes place in the presence of glutamine and ATP through an activated gamma-phospho-Glu-tRNA(Gln). This Bacillus cereus (strain G9842) protein is Glutamyl-tRNA(Gln) amidotransferase subunit A.